A 129-amino-acid chain; its full sequence is 3-aminoacrylate deaminase RutC (129 aa).

It belongs to the RutC family.

The catalysed reaction is (Z)-3-aminoacrylate + H2O + H(+) = 3-oxopropanoate + NH4(+). Functionally, involved in pyrimidine catabolism. Catalyzes the deamination of 3-aminoacrylate to malonic semialdehyde, a reaction that can also occur spontaneously. RutC may facilitate the reaction and modulate the metabolic fitness, rather than catalyzing essential functions. The sequence is that of 3-aminoacrylate deaminase RutC from Yersinia enterocolitica serotype O:8 / biotype 1B (strain NCTC 13174 / 8081).